Reading from the N-terminus, the 744-residue chain is MASEATNIPSPVVRQIDKQFLICSICLERYKNPKVLPCLHTFCERCLQNYIPAHSLTLSCPVCRQTSILPEKGVAALQNNFFITNLMDVLQRSPGSSAEESSILETVTAVAAGKPLSCPNHDGNVMDFYCQSCETAMCRECTEGEHAEHPTVPLKDVVEQHKASLQVQLDAANRRLPEIDSALQFISEIIHQLTNQKASIVDDIHSTFDELQKTLNVRKSVLLMELEVNYGLKHKVLQSQLDTLLEGQESIKSCSNFTAQALNHGTETEVLLVKKQMSEKLNELADQDFPLHPRENDQLDFIVETEGLKKSIHNLGTILTTNAVASETVATGEGLRQTIIGQPMSVTITTKDKDGELCKTGNAYLTAELSTPDGSVADGEILDNKNGTYEFLYTVQKEGDFTLSLRLYDQHIRGSPFKLKVIRSADVSPTTEGVKRRVKSPGSGHVKQKAVKRPASMYSTGKRKENPIEDDLIFRVGTKGRNKGEFTNLQGVAASTNGKILIADSNNQCVQIFSNDGQFKSRFGIRGRSPGQLQRPTGVAVHPSGDIIIADYDNKWVSIFSSDGKFKTKIGSGKLMGPKGVSVDRNGHIIVVDNKACCVFIFQPNGKIVTRFGSRGNGDRQFAGPHFAAVNSNNEIIVTDFHNHSVKVFNQEGEFMLKFGSNGEGNGQFNAPTGVAVDSNGNIIVADWGNSRIQVFDGSGSFLSYINTSADPLYGPQGLALTSDGHVVVADSGNHCFKVYRYLQ.

Phosphoserine is present on serine 10. An RING-type zinc finger spans residues 23 to 64 (CSICLERYKNPKVLPCLHTFCERCLQNYIPAHSLTLSCPVCR). The B box-type zinc finger occupies 113 to 154 (GKPLSCPNHDGNVMDFYCQSCETAMCRECTEGEHAEHPTVPL). Residues cysteine 118, histidine 121, cysteine 141, and histidine 146 each coordinate Zn(2+). The Filamin repeat unit spans residues 320 to 421 (TTNAVASETV…IRGSPFKLKV (102 aa)). Threonine 371 carries the phosphothreonine modification. 3 positions are modified to phosphoserine: serine 375, serine 424, and serine 428. A disordered region spans residues 432-462 (EGVKRRVKSPGSGHVKQKAVKRPASMYSTGK). 6 NHL repeats span residues 473-516 (IFRV…FSND), 520-563 (KSRF…FSSD), 564-605 (GKFK…FQPN), 609-652 (VTRF…FNQE), 656-699 (MLKF…FDGS), and 700-743 (GSFL…YRYL).

This sequence belongs to the TRIM/RBCC family. As to quaternary structure, forms homooligomers. Interacts with TRIM3; this interaction reduces TRIM2 activity. Interacts with myosin V; myosin V may not be a substrate for ubiquitination. Interacts with NEFL. Interacts with phosphorylated BCL2L11. Interacts with SIRPA. RING-type zinc finger-dependent and UBE2D1-dependent autoubiquitination.

It is found in the cytoplasm. The catalysed reaction is S-ubiquitinyl-[E2 ubiquitin-conjugating enzyme]-L-cysteine + [acceptor protein]-L-lysine = [E2 ubiquitin-conjugating enzyme]-L-cysteine + N(6)-ubiquitinyl-[acceptor protein]-L-lysine.. It functions in the pathway protein modification; protein ubiquitination. UBE2D1-dependent E3 ubiquitin-protein ligase that mediates the ubiquitination of NEFL and of phosphorylated BCL2L11. Plays a neuroprotective function. May play a role in neuronal rapid ischemic tolerance. Plays a role in antiviral immunity and limits New World arenavirus infection independently of its ubiquitin ligase activity. This Bos taurus (Bovine) protein is Tripartite motif-containing protein 2 (TRIM2).